Here is a 535-residue protein sequence, read N- to C-terminus: Signal transduction histidine-protein kinase AfsQ2 (535 aa).

At 1-30 (MTREHQGGTRGLAAARKGFWSGLRFTSLRL) the chain is on the cytoplasmic side. A helical membrane pass occupies residues 31-52 (RLVLVFGLVALTAAVSASGIAY). Over 53 to 198 (WLNREAVLTR…SLEPEAKDLN (146 aa)) the chain is Extracellular. Residues 199-219 (SLAWSLGIATALALLGSALLA) form a helical membrane-spanning segment. The Cytoplasmic segment spans residues 220 to 535 (QALATTVLKP…DRGKDAKGQV (316 aa)). Positions 224–276 (TTVLKPVHRLGVAARRLGEGKLDTRLRVSGTDELADLSRTFNSAAENLEKRVA) constitute an HAMP domain. Residues 291–510 (DMSHELRTPL…VFTLRLPQDP (220 aa)) form the Histidine kinase domain. Position 294 is a phosphohistidine (His294). Positions 493–535 (ENAPEGGAVFTLRLPQDPSPPADEDGGPDEETEDRGKDAKGQV) are disordered. A compositionally biased stretch (acidic residues) spans 514 to 525 (ADEDGGPDEETE). The span at 526–535 (DRGKDAKGQV) shows a compositional bias: basic and acidic residues.

Its subcellular location is the cell membrane. It carries out the reaction ATP + protein L-histidine = ADP + protein N-phospho-L-histidine.. Forms part of a two-component regulatory system AfsQ1/AfsQ2 involved in secondary metabolism. May activate AfsQ1 by phosphorylation. This is Signal transduction histidine-protein kinase AfsQ2 (afsQ2) from Streptomyces coelicolor (strain ATCC BAA-471 / A3(2) / M145).